Here is a 271-residue protein sequence, read N- to C-terminus: Phosphate import ATP-binding protein PstB 2 (271 aa).

In terms of domain architecture, ABC transporter spans 25–266; that stretch reads MATEDLHVYY…PQEKQTEDYI (242 aa). Residue 57-64 participates in ATP binding; sequence GPSGCGKS.

Belongs to the ABC transporter superfamily. Phosphate importer (TC 3.A.1.7) family. In terms of assembly, the complex is composed of two ATP-binding proteins (PstB), two transmembrane proteins (PstC and PstA) and a solute-binding protein (PstS).

The protein localises to the cell membrane. The catalysed reaction is phosphate(out) + ATP + H2O = ADP + 2 phosphate(in) + H(+). In terms of biological role, part of the ABC transporter complex PstSACB involved in phosphate import. Responsible for energy coupling to the transport system. In Listeria monocytogenes serovar 1/2a (strain ATCC BAA-679 / EGD-e), this protein is Phosphate import ATP-binding protein PstB 2.